The primary structure comprises 126 residues: Large ribosomal subunit protein bL12 (126 aa).

The tract at residues 97-126 is disordered; sequence PQPVKSGVSKEEAEEAKKQLAESGAEVEVK. Residues 104-116 show a composition bias toward basic and acidic residues; sequence VSKEEAEEAKKQL.

It belongs to the bacterial ribosomal protein bL12 family. Homodimer. Part of the ribosomal stalk of the 50S ribosomal subunit. Forms a multimeric L10(L12)X complex, where L10 forms an elongated spine to which 2 to 4 L12 dimers bind in a sequential fashion. Binds GTP-bound translation factors.

Forms part of the ribosomal stalk which helps the ribosome interact with GTP-bound translation factors. Is thus essential for accurate translation. This chain is Large ribosomal subunit protein bL12, found in Geotalea uraniireducens (strain Rf4) (Geobacter uraniireducens).